A 468-amino-acid polypeptide reads, in one-letter code: Ribulose bisphosphate carboxylase large chain (468 aa).

Residue lysine 5 is modified to N6,N6,N6-trimethyllysine. Positions 114 and 164 each coordinate substrate. Lysine 166 acts as the Proton acceptor in catalysis. Lysine 168 contacts substrate. Mg(2+) contacts are provided by lysine 192, aspartate 194, and glutamate 195. The residue at position 192 (lysine 192) is an N6-carboxylysine. Histidine 285 acts as the Proton acceptor in catalysis. Substrate-binding residues include arginine 286, histidine 318, and serine 370.

It belongs to the RuBisCO large chain family. Type I subfamily. Heterohexadecamer of 8 large chains and 8 small chains; disulfide-linked. The disulfide link is formed within the large subunit homodimers. Mg(2+) is required as a cofactor. The disulfide bond which can form in the large chain dimeric partners within the hexadecamer appears to be associated with oxidative stress and protein turnover.

Its subcellular location is the plastid. The protein localises to the chloroplast. It carries out the reaction 2 (2R)-3-phosphoglycerate + 2 H(+) = D-ribulose 1,5-bisphosphate + CO2 + H2O. The enzyme catalyses D-ribulose 1,5-bisphosphate + O2 = 2-phosphoglycolate + (2R)-3-phosphoglycerate + 2 H(+). Functionally, ruBisCO catalyzes two reactions: the carboxylation of D-ribulose 1,5-bisphosphate, the primary event in carbon dioxide fixation, as well as the oxidative fragmentation of the pentose substrate in the photorespiration process. Both reactions occur simultaneously and in competition at the same active site. In Tecoma stans (Yellow bells), this protein is Ribulose bisphosphate carboxylase large chain.